Consider the following 610-residue polypeptide: Elongation factor 4 (610 aa).

In terms of domain architecture, tr-type G spans 11–193 (EKIRNFSIIA…QIVEKVPAPT (183 aa)). GTP is bound by residues 23–28 (DHGKST) and 140–143 (NKID).

It belongs to the TRAFAC class translation factor GTPase superfamily. Classic translation factor GTPase family. LepA subfamily.

It localises to the cell membrane. It carries out the reaction GTP + H2O = GDP + phosphate + H(+). In terms of biological role, required for accurate and efficient protein synthesis under certain stress conditions. May act as a fidelity factor of the translation reaction, by catalyzing a one-codon backward translocation of tRNAs on improperly translocated ribosomes. Back-translocation proceeds from a post-translocation (POST) complex to a pre-translocation (PRE) complex, thus giving elongation factor G a second chance to translocate the tRNAs correctly. Binds to ribosomes in a GTP-dependent manner. The sequence is that of Elongation factor 4 from Streptococcus pyogenes serotype M6 (strain ATCC BAA-946 / MGAS10394).